The chain runs to 375 residues: Aldehyde reductase FrzD (375 aa).

FMN-binding residues include A61, Q103, and H171. The active-site Proton donor is Y176. FMN is bound by residues K223, G294, and R319.

The protein belongs to the NADH:flavin oxidoreductase/NADH oxidase family. It depends on FMN as a cofactor.

The enzyme catalyses (1S,4S)-4-[(4-hydroxyphenyl)methyl]-2,5-diazaspiro[bicyclo[3.2.1]octane-6,1'-cyclohexane]-2',5'-dien-4'-one + 2 NADPH + 2 H(+) = (1S,4S)-4-[(4-hydroxyphenyl)methyl]-2,5-diazaspiro[bicyclo[3.2.1]octane-6,1'-cyclohexan]-4'-one + 2 NADP(+). Its pathway is alkaloid biosynthesis; ergot alkaloid biosynthesis. Its function is as follows. Aldehyde reductase; part of the gene cluster that mediates the biosynthesis of the alkaloid (-)-FR901483, a potent immunosuppressant that shows efficacy in animal models and a probable inhibitor of purine nucleotide biosynthesis by targeting phosphoribosylpyrophosphate amidotransferase (PPAT). Within the pathway, FrzD reduces the dienone portion of the pathway intermediates to cyclohexanone. The biosynthesis of (-)-FR901483 starts with the condensation of two L-tyrosines to yield (S,S)-dityrosyl-piperazine. This process occurs in 3 steps with the non-canonical nonribosomal peptide synthetase FrzA catalyzing the reduction of L-tyrosine into L-tyrosinal, the spontaneous condensation of 2 L-tyrosinal units, and the subsequent reduction by the NmrA-like family domain-containing oxidoreductase FrzB. The cytochrome P450 monooxygenase FrzC then performs coupling between N10 and C1' to morph the piperazine into a 1,4-diazabicyclo[3.2.1]octane spiro-fused to a 2,5-cyclohexadienone. The dienone portion is further reduced to cyclohexanone by the flavin-dependent reductase FrzD. The methyltranserases (MTs) FrzE and FrzF are then involved in the methylation at the C10' amine and the C4 phenolic oxygen, respectively. The order of the two MTs appear to be interchangeable. Cleavage of the C9-N10' bond by the dioxygenase FrzG then leads to formation of a conjugated iminium. In addition to the oxidation of C9, an additional dehydrogenation between C7 and C8 can occur to give a likely shunt product. The next biosynthetic step is the intramolecular aldol condensation catalyzed by the newly identified aldolase FrzH to yield an aza-tricyclic product with the formation of a C9-C3' bond. The short-chain dehydrogenase/reductase FrzI then produces dephospho-(-)-FR901483 that is phosphorylated at C4'-OH into (-)-FR901483 by the phosphotransferase FrzJ. The only unassigned enzyme in the cluster is the second cytochrome P450 monooxygenase FrzL. In Cladobotryum sp, this protein is Aldehyde reductase FrzD.